A 434-amino-acid polypeptide reads, in one-letter code: ATP-sensitive inward rectifier potassium channel 14 (434 aa).

Residues 1–81 (MGLARALRRL…LSDLFTTCVD (81 aa)) lie on the Cytoplasmic side of the membrane. An S-nitrosocysteine modification is found at Cys79. Residues 82–108 (VRWRWMCLLFSCSFLASWLLFGLTFWL) traverse the membrane as a helical segment. At 109 to 131 (IASLHGDLAAPPPPAPCFSQVAS) the chain is on the extracellular side. The segment at residues 132–148 (FLAAFLFALETQTSIGY) is an intramembrane region (helical; Pore-forming). Positions 145–150 (SIGYGV) match the Selectivity filter motif. At 149–157 (GVRSVTEEC) the chain is on the extracellular side. Residues 158–185 (PAAVAAVVLQCIAGCVLDAFVVGAVMAK) form a helical membrane-spanning segment. At 186 to 434 (MAKPKKRNET…TPTLALTLPP (249 aa)) the chain is on the cytoplasmic side. Positions 398 to 434 (QEEDEEEDTKEGTSAETPERAASPQALTPTLALTLPP) are disordered. A compositionally biased stretch (basic and acidic residues) spans 407–416 (KEGTSAETPE). Residues 418–434 (AASPQALTPTLALTLPP) are compositionally biased toward low complexity.

This sequence belongs to the inward rectifier-type potassium channel (TC 1.A.2.1) family. KCNJ14 subfamily.

The protein localises to the membrane. It catalyses the reaction K(+)(in) = K(+)(out). With respect to regulation, channel activity is regulated by variations of cytosolic pH; channels are activated by alkaline and inhibited by acidic pH values. Inhibited by Ba(2+) and Cs(+) in a voltage-dependent manner; sensitivity to those inhibitors is lower than in other Kir channels. Functionally, inward rectifier potassium channels are characterized by a greater tendency to allow potassium to flow into the cell rather than out of it. Their voltage dependence is regulated by the concentration of extracellular potassium; as external potassium is raised, the voltage range of the channel opening shifts to more positive voltages. In Mus musculus (Mouse), this protein is ATP-sensitive inward rectifier potassium channel 14 (Kcnj14).